A 308-amino-acid chain; its full sequence is Porphobilinogen deaminase (308 aa).

C241 carries the S-(dipyrrolylmethanemethyl)cysteine modification.

Belongs to the HMBS family. Monomer. It depends on dipyrromethane as a cofactor.

It carries out the reaction 4 porphobilinogen + H2O = hydroxymethylbilane + 4 NH4(+). It participates in porphyrin-containing compound metabolism; protoporphyrin-IX biosynthesis; coproporphyrinogen-III from 5-aminolevulinate: step 2/4. Tetrapolymerization of the monopyrrole PBG into the hydroxymethylbilane pre-uroporphyrinogen in several discrete steps. This is Porphobilinogen deaminase from Staphylococcus aureus (strain Mu50 / ATCC 700699).